Here is a 356-residue protein sequence, read N- to C-terminus: Alanine racemase (356 aa).

The Proton acceptor; specific for D-alanine role is filled by Lys35. Lys35 is modified (N6-(pyridoxal phosphate)lysine). Arg130 provides a ligand contact to substrate. The active-site Proton acceptor; specific for L-alanine is Tyr253. Met301 lines the substrate pocket.

It belongs to the alanine racemase family. It depends on pyridoxal 5'-phosphate as a cofactor.

The enzyme catalyses L-alanine = D-alanine. Its pathway is amino-acid biosynthesis; D-alanine biosynthesis; D-alanine from L-alanine: step 1/1. Functionally, catalyzes the interconversion of L-alanine and D-alanine. May also act on other amino acids. The polypeptide is Alanine racemase (alr) (Sodalis glossinidius (strain morsitans)).